A 485-amino-acid chain; its full sequence is MGKFAKKLERAIRGYTFDDVLLIPQATEVEPKDVDVSTQITPNVKLNIPILSAAMDTVTEWEMAVAMAREGGLGVIHRNMSIEEQVEQVKRVKKAERFIVEDVITISPEETVDFALFLMEKHDIDGLPVVENEKVVGIISKKDIAAREGKLVKELMTKDVITVPENIEVEEALKIMIENRIDRLPVVDKEGRLIGLITMSDLVARKKYKNAVRDENGELLVAAAVSPFDIRRAIELDRAGADVIVVDTAHAHNLKAIKAMKEMRQKVDADFIVGNIANPKAVDDLTFADAVKVGIGPGSICTTRIVAGVGVPQITAIAMVADRAQEYGLYVIADGGIKYSGDIVKAIAAGADAVMLGNLLAGTKEAPGKEVIINGRKYKQYRGMGSLGAMMKGGAERYYQGGYMKTRKFVPEGVEGVVPYRGTVSEVLYQLVGGLKAGMGYVGARNIKELKEKGEFVIITSAGLRESHPHDIIITNEAPNYPLEK.

2 CBS domains span residues 99–154 (IVED…LVKE) and 156–215 (MTKD…VRDE). NAD(+)-binding positions include Asp247 and 294 to 296 (GIG). 2 residues coordinate K(+): Gly296 and Gly298. Ser299 contacts IMP. Cys301 is a binding site for K(+). Cys301 serves as the catalytic Thioimidate intermediate. Residues 334 to 336 (DGG), 357 to 358 (GN), and 381 to 385 (YRGMG) contribute to the IMP site. Arg397 functions as the Proton acceptor in the catalytic mechanism. Glu412 serves as a coordination point for IMP. The K(+) site is built by Glu466, Ser467, and His468.

The protein belongs to the IMPDH/GMPR family. In terms of assembly, homotetramer. K(+) serves as cofactor.

It catalyses the reaction IMP + NAD(+) + H2O = XMP + NADH + H(+). It functions in the pathway purine metabolism; XMP biosynthesis via de novo pathway; XMP from IMP: step 1/1. With respect to regulation, mycophenolic acid (MPA) is a non-competitive inhibitor that prevents formation of the closed enzyme conformation by binding to the same site as the amobile flap. In contrast, mizoribine monophosphate (MZP) is a competitive inhibitor that induces the closed conformation. MPA is a potent inhibitor of mammalian IMPDHs but a poor inhibitor of the bacterial enzymes. MZP is a more potent inhibitor of bacterial IMPDH. Catalyzes the conversion of inosine 5'-phosphate (IMP) to xanthosine 5'-phosphate (XMP), the first committed and rate-limiting step in the de novo synthesis of guanine nucleotides, and therefore plays an important role in the regulation of cell growth. This is Inosine-5'-monophosphate dehydrogenase from Pyrococcus abyssi (strain GE5 / Orsay).